A 202-amino-acid polypeptide reads, in one-letter code: Snake venom metalloproteinase atroxlysin-1 (202 aa).

The Peptidase M12B domain occupies 6–202 (RYVDLFIVVD…ENPQCILNKR (197 aa)). Residues aspartate 9 and aspartate 93 each coordinate Ca(2+). Intrachain disulfides connect cysteine 117–cysteine 197, cysteine 157–cysteine 181, and cysteine 159–cysteine 164. Histidine 142 provides a ligand contact to Zn(2+). The active site involves glutamate 143. Zn(2+)-binding residues include histidine 146 and histidine 152. The Ca(2+) site is built by cysteine 197 and asparagine 200.

This sequence belongs to the venom metalloproteinase (M12B) family. P-I subfamily. As to quaternary structure, monomer. Requires Zn(2+) as cofactor. As to expression, expressed by the venom gland.

It localises to the secreted. Its activity is regulated as follows. Inhibited by EDTA, DTT and high concentrations of zinc ions (&gt;2 mM). Weakly inhibited by TLCK. Not inhibited by PMSF. Activated by calcium ions. Its function is as follows. Snake venom zinc metalloproteinase that acts on fibrinogen, fibrin, fibronectin (FN1), type I collagen, type IV collagen, integrin alpha-7/beta-1 (ITGA7/ITGB1) and integrin alpha-1/beta-1 (ITGA1/ITGB1). Binds to fibronectin (FN1), fibrinogen and, weakly, to type I collagen and laminin. Cleaves Xaa-Leu bonds. Inhibits ADP- and collagen-induced platelet aggregation both in the presence (IC(50)=1.4 uM for collagen) and in the absence (IC(50)=2.2 uM for collagen) of cofactors. Has hemorrhagic activity. This chain is Snake venom metalloproteinase atroxlysin-1, found in Bothrops atrox (Barba amarilla).